We begin with the raw amino-acid sequence, 264 residues long: Undecaprenyl-diphosphatase (264 aa).

Helical transmembrane passes span 15–37 (GLTE…LLGF), 42–62 (AASF…VLYW), 84–104 (YLLF…HDFI), 108–128 (LFNP…ILIV), 143–163 (VTPK…WPGF), 182–202 (IAAE…TGYD), 217–237 (FLAV…KGFI), and 243–263 (LTLR…LFFW).

This sequence belongs to the UppP family.

It is found in the cell inner membrane. The enzyme catalyses di-trans,octa-cis-undecaprenyl diphosphate + H2O = di-trans,octa-cis-undecaprenyl phosphate + phosphate + H(+). Catalyzes the dephosphorylation of undecaprenyl diphosphate (UPP). Confers resistance to bacitracin. This Maridesulfovibrio salexigens (strain ATCC 14822 / DSM 2638 / NCIMB 8403 / VKM B-1763) (Desulfovibrio salexigens) protein is Undecaprenyl-diphosphatase.